The chain runs to 355 residues: Uroporphyrinogen decarboxylase (355 aa).

Substrate-binding positions include 27–31, Asp-77, Tyr-154, Thr-209, and His-328; that span reads RQAGR.

It belongs to the uroporphyrinogen decarboxylase family. Homodimer.

The protein localises to the cytoplasm. The enzyme catalyses uroporphyrinogen III + 4 H(+) = coproporphyrinogen III + 4 CO2. The protein operates within porphyrin-containing compound metabolism; protoporphyrin-IX biosynthesis; coproporphyrinogen-III from 5-aminolevulinate: step 4/4. In terms of biological role, catalyzes the decarboxylation of four acetate groups of uroporphyrinogen-III to yield coproporphyrinogen-III. This chain is Uroporphyrinogen decarboxylase, found in Aliivibrio fischeri (strain ATCC 700601 / ES114) (Vibrio fischeri).